Consider the following 429-residue polypeptide: Glucose-1-phosphate adenylyltransferase (429 aa).

Residues glycine 162, 177–178, and serine 209 each bind alpha-D-glucose 1-phosphate; that span reads EK.

Belongs to the bacterial/plant glucose-1-phosphate adenylyltransferase family. In terms of assembly, homotetramer.

The enzyme catalyses alpha-D-glucose 1-phosphate + ATP + H(+) = ADP-alpha-D-glucose + diphosphate. The protein operates within glycan biosynthesis; glycogen biosynthesis. Functionally, involved in the biosynthesis of ADP-glucose, a building block required for the elongation reactions to produce glycogen. Catalyzes the reaction between ATP and alpha-D-glucose 1-phosphate (G1P) to produce pyrophosphate and ADP-Glc. This is Glucose-1-phosphate adenylyltransferase from Rippkaea orientalis (strain PCC 8801 / RF-1) (Cyanothece sp. (strain PCC 8801)).